The following is a 306-amino-acid chain: MNLKQEKIAVLLGGTSAEREVSLNSGKAVLEALLKQGYNAHPIDPKEYNVANLKKDGFNRAFNILHGRGGEDGTMQGLLEQIGLPYTGCGVMASALTMDKMRTKMLWKAFGLPVADMKVVTRETFSELDPQAVVAKLGLPLMVKPSLEGSSVGLTKVKAVEELKSAVEYALKFDNTILIEEWLAGDELTVPVLDNQVLPAIRIVPEGEFYDYEAKYISDNTQYFCPAGLTPEREQALSTLVKRAYDAVGCRGWSRIDVMCDAKGNFRLVEVNTNPGMTSHSLFPKSAATVGISFEQLVVKILELSL.

Active-site residues include Glu18 and Ser150. The ATP-grasp domain maps to 104–303; it reads KMLWKAFGLP…FEQLVVKILE (200 aa). 134-189 is an ATP binding site; sequence VAKLGLPLMVKPSLEGSSVGLTKVKAVEELKSAVEYALKFDNTILIEEWLAGDELT. Positions 257, 270, and 272 each coordinate Mg(2+). Ser281 is an active-site residue.

The protein belongs to the D-alanine--D-alanine ligase family. Requires Mg(2+) as cofactor. The cofactor is Mn(2+).

It is found in the cytoplasm. The enzyme catalyses 2 D-alanine + ATP = D-alanyl-D-alanine + ADP + phosphate + H(+). It participates in cell wall biogenesis; peptidoglycan biosynthesis. Functionally, cell wall formation. This chain is D-alanine--D-alanine ligase, found in Haemophilus influenzae (strain ATCC 51907 / DSM 11121 / KW20 / Rd).